The chain runs to 120 residues: Ribonuclease P protein component (120 aa).

The protein belongs to the RnpA family. In terms of assembly, consists of a catalytic RNA component (M1 or rnpB) and a protein subunit.

The enzyme catalyses Endonucleolytic cleavage of RNA, removing 5'-extranucleotides from tRNA precursor.. Its function is as follows. RNaseP catalyzes the removal of the 5'-leader sequence from pre-tRNA to produce the mature 5'-terminus. It can also cleave other RNA substrates such as 4.5S RNA. The protein component plays an auxiliary but essential role in vivo by binding to the 5'-leader sequence and broadening the substrate specificity of the ribozyme. This is Ribonuclease P protein component from Desulfotalea psychrophila (strain LSv54 / DSM 12343).